The chain runs to 604 residues: MDHIRNFSIIAHIDHGKSTLADRIIQRCGGLSDREMEAQVLDSMDIERERGITIKAQTAALNYKARDGRVYQLNLIDTPGHVDFSYEVSRSLSACEGALLVVDASQGVEAQTVANCYTALDLGVEVVPVLNKMDLPQADPENAKAEIEDVIGIDAEHAIPCSAKTGEGIDEILEAVITRMPAPRGQPDGPPRAMIIDSWFDNYVGVVMLVRMVDGVLRKGDRIRMMATDTVYPLEQLGVFAPKSESREQLKAGEVGFLIAGIKELQAAKVGDTITLEKKLPNNAGPASDPLPGFKEIQPQVFAGLYPTEASEYDQLRDALEKLKLNDSSLRYEPEVSQALGFGFRCGFLGLLHMEIVQERLEREFDQDLITTAPSVVYQVQLGGLAGEVIEVENPSKMPEIGKIAEIREPIVTVHLYMPQDYVGPVMTLANQKRGVQLNMAYHGRQVMLTYEMPLAEIVLDFFDKLKSVSRGYASMDYEFKEYRAADVVKVDILINGDRVDALSIIVHRSQSQYRGRAVVAKMREIISRQMYDVAIQAAIGANIIARENIKALRKNVLAKCYGGDISRKRKLLEKQKAGKKRMKQIGSVEVPQEAFLAILQVDD.

Residues 2-184 (DHIRNFSIIA…AVITRMPAPR (183 aa)) form the tr-type G domain. Residues 14–19 (DHGKST) and 131–134 (NKMD) contribute to the GTP site.

The protein belongs to the TRAFAC class translation factor GTPase superfamily. Classic translation factor GTPase family. LepA subfamily.

Its subcellular location is the cell inner membrane. It catalyses the reaction GTP + H2O = GDP + phosphate + H(+). Functionally, required for accurate and efficient protein synthesis under certain stress conditions. May act as a fidelity factor of the translation reaction, by catalyzing a one-codon backward translocation of tRNAs on improperly translocated ribosomes. Back-translocation proceeds from a post-translocation (POST) complex to a pre-translocation (PRE) complex, thus giving elongation factor G a second chance to translocate the tRNAs correctly. Binds to ribosomes in a GTP-dependent manner. This chain is Elongation factor 4, found in Methylibium petroleiphilum (strain ATCC BAA-1232 / LMG 22953 / PM1).